The following is an 88-amino-acid chain: Small ribosomal subunit protein bS20 (88 aa).

Positions 1–21 are enriched in basic residues; that stretch reads MANSKSAKKRALQSEKRRQHN. Residues 1-27 are disordered; that stretch reads MANSKSAKKRALQSEKRRQHNASRSSM.

It belongs to the bacterial ribosomal protein bS20 family.

Functionally, binds directly to 16S ribosomal RNA. This chain is Small ribosomal subunit protein bS20, found in Shewanella piezotolerans (strain WP3 / JCM 13877).